Reading from the N-terminus, the 669-residue chain is Zinc finger CCCH domain-containing protein 17 (669 aa).

Low complexity predominate over residues 1 to 11 (MFAPATQPQQQ). Residues 1 to 23 (MFAPATQPQQQHEQKKQSETVSS) are disordered. 3 consecutive C3H1-type zinc fingers follow at residues 34–58 (DCVY…HSEY), 60–86 (RMNP…HPPL), and 114–141 (AKQP…HTPN). Disordered regions lie at residues 150-175 (PVEA…EKKL), 285-306 (VEDR…PDFS), 376-589 (GMRL…VMEE), and 642-669 (EEGE…EMLS). Composition is skewed to basic and acidic residues over residues 164 to 175 (KPIENNTEEKKL), 285 to 299 (VEDR…RGNS), 392 to 406 (SMDR…DTPR), 420 to 464 (KLRE…EENH), 478 to 499 (RRRE…ESKP), and 547 to 579 (NNKD…PKAE). 2 stretches are compositionally biased toward acidic residues: residues 580–589 (VEEEGTVMEE) and 642–659 (EEGE…GEED). A compositionally biased stretch (basic and acidic residues) spans 660–669 (IEKKTVEMLS).

This chain is Zinc finger CCCH domain-containing protein 17, found in Arabidopsis thaliana (Mouse-ear cress).